We begin with the raw amino-acid sequence, 188 residues long: PRA1 family protein 3 (188 aa).

The residue at position 1 (methionine 1) is an N-acetylmethionine. The Cytoplasmic segment spans residues 1–35; the sequence is MDVNIAPLRAWDDFFPGSDRFARPDFRDISKWNNR. The next 2 helical transmembrane spans lie at 36-56 and 57-77; these read VVSN…MMIS and VVGF…VLVF. Topologically, residues 78–93 are cytoplasmic; that stretch reads TGFVWAAHNKDILRRM. 2 helical membrane-spanning segments follow: residues 94–114 and 115–135; these read KKQY…FLIS and LFGG…LMFI. Positions 103-117 are required for homodimer formation and heterodimer formation with ARL6IP1; that stretch reads MVVMLASYFLISLFG. At 136-188 the chain is on the cytoplasmic side; it reads HASLRLRNLKNKLENKMEEIGLKRTPMGIVLDALEQQEETITKFSDYISKMKE. Residues 136–188 are targeting to endoplasmic reticulum membrane; sequence HASLRLRNLKNKLENKMEEIGLKRTPMGIVLDALEQQEETITKFSDYISKMKE.

The protein belongs to the PRA1 family. As to quaternary structure, homodimer. Heterodimer with ARL6IP1. Forms multimers. Interacts with ARL6. Interacts with prenylated RAB1A and RAB3A. Interacts with SLC1A1/EAAC1. Interacts with RTN2 (via first transmembrane domain). Does not interact with VAMP1, VAMP2 or VAMP3.

It is found in the endoplasmic reticulum membrane. The protein localises to the cell membrane. Its subcellular location is the cytoplasm. It localises to the cytoskeleton. Its function is as follows. Regulates intracellular concentrations of taurine and glutamate. Negatively modulates SLC1A1/EAAC1 glutamate transport activity by decreasing its affinity for glutamate in a PKC activity-dependent manner. Plays a role in the retention of SLC1A1/EAAC1 in the endoplasmic reticulum. In Bos taurus (Bovine), this protein is PRA1 family protein 3 (ARL6IP5).